The following is a 1009-amino-acid chain: Helicase-like transcription factor (1009 aa).

The residue at position 27 (R27) is an Omega-N-methylarginine. The DNA-binding element occupies 38-287; sequence EFQDVIPPDD…FSEKDRPENV (250 aa). Residue K112 forms a Glycyl lysine isopeptide (Lys-Gly) (interchain with G-Cter in SUMO2) linkage. A Phosphotyrosine; by JAK2 modification is found at Y195. K211 participates in a covalent cross-link: Glycyl lysine isopeptide (Lys-Gly) (interchain with G-Cter in SUMO2). 294 to 301 contacts ATP; it reads DDMGLGKT. A disordered region spans residues 336 to 365; that stretch reads DDSMKLGGNNTSEKADGLSKDASRCSEQPS. The span at 348-359 shows a compositional bias: basic and acidic residues; sequence EKADGLSKDASR. A phosphoserine mark is found at S397, S398, and S400. A Helicase ATP-binding domain is found at 435–606; it reads IEDVAFACAL…WSLLSFLKLK (172 aa). Positions 557 to 560 match the DEGH box motif; that stretch reads DEGH. T736 carries the phosphothreonine modification. An RING-type zinc finger spans residues 760–801; that stretch reads CAICLDSLTVPVITHCAHVFCKPCICQVIQNEQPHAKCPLCR. The Helicase C-terminal domain occupies 837-996; sequence ALMHALTDLR…TKKPNADEMK (160 aa). The tract at residues 925–1009 is interaction with SP1 and SP3; it reads SRVFLMDPAW…INEIRTLIDL (85 aa).

Belongs to the SNF2/RAD54 helicase family. RAD16 subfamily. Interacts with SP1 and SP3 independently of DNA; the interaction with these transcriptional factors may be required for basal transcription of target genes. Interacts with EGR1; the interaction requires prior binding to DNA and represses c-Rel via a DNA looping mechanism. Interacts with GATA4. Interacts with PCNA; the interaction promotes polyubiquitination of PCNA through association with the UBE2B-RAD18 and UBE2V2-UBE2N ubiquitin ligase complexes. Interacts with RAD18, SHPRH, UBE2V2 and UBE2N. As to expression, expressed in brain, heart, kidney, liver, lung, pancreas, placenta and skeletal muscle.

The protein resides in the cytoplasm. It localises to the nucleus. Its subcellular location is the nucleolus. It is found in the nucleoplasm. The enzyme catalyses S-ubiquitinyl-[E2 ubiquitin-conjugating enzyme]-L-cysteine + [acceptor protein]-L-lysine = [E2 ubiquitin-conjugating enzyme]-L-cysteine + N(6)-ubiquitinyl-[acceptor protein]-L-lysine.. It functions in the pathway protein modification; protein ubiquitination. Has both helicase and E3 ubiquitin ligase activities. Possesses intrinsic ATP-dependent nucleosome-remodeling activity; This activity may be required for transcriptional activation or repression of specific target promoters. These may include the SERPINE1 and HIV-1 promoters and the SV40 enhancer, to which this protein can bind directly. Plays a role in error-free postreplication repair (PRR) of damaged DNA and maintains genomic stability through acting as a ubiquitin ligase for 'Lys-63'-linked polyubiquitination of chromatin-bound PCNA. The chain is Helicase-like transcription factor (HLTF) from Homo sapiens (Human).